The following is a 419-amino-acid chain: MSRYVFTSESVTEGHPDKICDQVSDAVLDALLAQDPSSRVACETVVNTGLCLITGEVTSNSQVDFIHLVRNVIREIGYSGARAGGFDATSCAVLVALDQQSPDIAQGVNEADDHSGDPLDKVGAGDQGIMFGYACDDTPELMPLPISLAHRLARQLAAVRHDGSLSYLLPDGKTQVSVVYENDRPVAIDTILISTQHTSEVEGISDENGIRERITQDLWTHVVEPATADLPLKPNREATRFLVNPTGKFVVGGPQGDAGLTGRKIIVDTYGGYARHGGGAFSGKDPTKVDRSAAYAARFVAKCLVAAGLAQRAEVQLSYAIGVAKPVSILVESFGTGKVTNDELTALVQDHFDLRPGAIIEQFKLRQLPQQRGGRFYQDTAAYGHFGRPDLNLPWEDVTDKASTLLQAEAQQQKQGSSL.

An ATP-binding site is contributed by His15. Asp17 serves as a coordination point for Mg(2+). Glu43 contacts K(+). L-methionine contacts are provided by Glu56 and Gln100. A flexible loop region spans residues 100–110 (QSPDIAQGVNE). ATP contacts are provided by residues 171–173 (DGK), 248–249 (KF), Asp257, 263–264 (RK), Ala280, and Lys284. Position 257 (Asp257) interacts with L-methionine. Lys288 contacts L-methionine.

It belongs to the AdoMet synthase family. Homotetramer; dimer of dimers. Mg(2+) is required as a cofactor. It depends on K(+) as a cofactor.

Its subcellular location is the cytoplasm. The enzyme catalyses L-methionine + ATP + H2O = S-adenosyl-L-methionine + phosphate + diphosphate. Its pathway is amino-acid biosynthesis; S-adenosyl-L-methionine biosynthesis; S-adenosyl-L-methionine from L-methionine: step 1/1. Functionally, catalyzes the formation of S-adenosylmethionine (AdoMet) from methionine and ATP. The overall synthetic reaction is composed of two sequential steps, AdoMet formation and the subsequent tripolyphosphate hydrolysis which occurs prior to release of AdoMet from the enzyme. This chain is S-adenosylmethionine synthase, found in Prochlorococcus marinus (strain MIT 9303).